A 193-amino-acid chain; its full sequence is dCTP deaminase (193 aa).

DCTP-binding positions include 110–115 (RSSLAR), Asp128, 136–138 (VLE), Tyr171, Lys178, and Gln182. Glu138 functions as the Proton donor/acceptor in the catalytic mechanism. Residues 174–193 (RKSAKYKDQQEAVASRISQD) form a disordered region.

Belongs to the dCTP deaminase family. As to quaternary structure, homotrimer.

It catalyses the reaction dCTP + H2O + H(+) = dUTP + NH4(+). It functions in the pathway pyrimidine metabolism; dUMP biosynthesis; dUMP from dCTP (dUTP route): step 1/2. In terms of biological role, catalyzes the deamination of dCTP to dUTP. This Shewanella baltica (strain OS223) protein is dCTP deaminase.